We begin with the raw amino-acid sequence, 185 residues long: Photosystem I assembly protein Ycf4 (185 aa).

Transmembrane regions (helical) follow at residues Gly-20–Ala-40 and Ile-57–Ser-77.

Belongs to the Ycf4 family.

The protein localises to the plastid. It is found in the chloroplast thylakoid membrane. In terms of biological role, seems to be required for the assembly of the photosystem I complex. The chain is Photosystem I assembly protein Ycf4 from Lolium perenne (Perennial ryegrass).